An 85-amino-acid polypeptide reads, in one-letter code: Conotoxin Lv15a (85 aa).

A signal peptide spans 1 to 23 (MEKLTVLILVATVLLMIQVLAQS). A propeptide spanning residues 24–49 (GGDKHLKRRPKQYATKRLSALMRGHR) is cleaved from the precursor. Q50 bears the Pyrrolidone carboxylic acid mark.

The protein belongs to the conotoxin O2 superfamily. Contains 4 disulfide bonds. Expressed by the venom duct.

The protein localises to the secreted. The protein is Conotoxin Lv15a of Conus lividus (Livid cone).